The chain runs to 220 residues: Protein DGCR6L (220 aa).

The stretch at 76-159 forms a coiled coil; that stretch reads KSLYNQRLRL…ADQQSTLEKA (84 aa).

This sequence belongs to the gonadal family. In terms of tissue distribution, widely expressed in fetal and adult tissues. Highest expression in liver, heart and skeletal muscle. Lower levels in pancreas and placenta. Weak expression in brain.

Its subcellular location is the nucleus. In terms of biological role, may play a role in neural crest cell migration into the third and fourth pharyngeal pouches. The polypeptide is Protein DGCR6L (DGCR6L) (Homo sapiens (Human)).